A 319-amino-acid chain; its full sequence is Acetyl-coenzyme A carboxylase carboxyl transferase subunit alpha (319 aa).

The 262-residue stretch at 35–296 folds into the CoA carboxyltransferase C-terminal domain; sequence NIDEEVHRLR…KAQLLEDLAD (262 aa).

It belongs to the AccA family. Acetyl-CoA carboxylase is a heterohexamer composed of biotin carboxyl carrier protein (AccB), biotin carboxylase (AccC) and two subunits each of ACCase subunit alpha (AccA) and ACCase subunit beta (AccD).

It localises to the cytoplasm. It carries out the reaction N(6)-carboxybiotinyl-L-lysyl-[protein] + acetyl-CoA = N(6)-biotinyl-L-lysyl-[protein] + malonyl-CoA. It functions in the pathway lipid metabolism; malonyl-CoA biosynthesis; malonyl-CoA from acetyl-CoA: step 1/1. Component of the acetyl coenzyme A carboxylase (ACC) complex. First, biotin carboxylase catalyzes the carboxylation of biotin on its carrier protein (BCCP) and then the CO(2) group is transferred by the carboxyltransferase to acetyl-CoA to form malonyl-CoA. The sequence is that of Acetyl-coenzyme A carboxylase carboxyl transferase subunit alpha from Salmonella arizonae (strain ATCC BAA-731 / CDC346-86 / RSK2980).